A 421-amino-acid polypeptide reads, in one-letter code: Thymidine phosphorylase (421 aa).

It belongs to the thymidine/pyrimidine-nucleoside phosphorylase family. In terms of assembly, homodimer.

The catalysed reaction is thymidine + phosphate = 2-deoxy-alpha-D-ribose 1-phosphate + thymine. The enzymes which catalyze the reversible phosphorolysis of pyrimidine nucleosides are involved in the degradation of these compounds and in their utilization as carbon and energy sources, or in the rescue of pyrimidine bases for nucleotide synthesis. The protein is Thymidine phosphorylase (deoA) of Mycoplasma genitalium (strain ATCC 33530 / DSM 19775 / NCTC 10195 / G37) (Mycoplasmoides genitalium).